An 83-amino-acid chain; its full sequence is Putative beta-neurotoxin RjAa10f (83 aa).

The N-terminal stretch at 1-18 (MKILIFIIASFMLIGVWC) is a signal peptide. The 64-residue stretch at 19–82 (KEGYPMGRDG…VWDPNNNKCV (64 aa)) folds into the LCN-type CS-alpha/beta domain. 4 cysteine pairs are disulfide-bonded: Cys29-Cys81, Cys33-Cys55, Cys40-Cys62, and Cys44-Cys64.

Belongs to the long (4 C-C) scorpion toxin superfamily. Sodium channel inhibitor family. Beta subfamily. Expressed by the venom gland.

The protein resides in the secreted. Its function is as follows. Beta toxins bind voltage-independently at site-4 of sodium channels (Nav) and shift the voltage of activation toward more negative potentials thereby affecting sodium channel activation and promoting spontaneous and repetitive firing. The polypeptide is Putative beta-neurotoxin RjAa10f (Rhopalurus junceus (Caribbean blue scorpion)).